The primary structure comprises 296 residues: Nitrogenase iron protein (296 aa).

An ATP-binding site is contributed by 12 to 19; it reads GKGGIGKS. Cysteine 100 contributes to the [4Fe-4S] cluster binding site. Arginine 103 is modified (ADP-ribosylarginine; by dinitrogenase reductase ADP-ribosyltransferase). Cysteine 134 contacts [4Fe-4S] cluster.

This sequence belongs to the NifH/BchL/ChlL family. As to quaternary structure, homodimer. Requires [4Fe-4S] cluster as cofactor. In terms of processing, the reversible ADP-ribosylation of Arg-103 inactivates the nitrogenase reductase and regulates nitrogenase activity.

The catalysed reaction is N2 + 8 reduced [2Fe-2S]-[ferredoxin] + 16 ATP + 16 H2O = H2 + 8 oxidized [2Fe-2S]-[ferredoxin] + 2 NH4(+) + 16 ADP + 16 phosphate + 6 H(+). The key enzymatic reactions in nitrogen fixation are catalyzed by the nitrogenase complex, which has 2 components: the iron protein and the molybdenum-iron protein. This chain is Nitrogenase iron protein, found in Acidithiobacillus ferrooxidans (strain ATCC 23270 / DSM 14882 / CIP 104768 / NCIMB 8455) (Ferrobacillus ferrooxidans (strain ATCC 23270)).